We begin with the raw amino-acid sequence, 234 residues long: UPF0173 metal-dependent hydrolase Meso_1362 (234 aa).

This sequence belongs to the UPF0173 family.

The sequence is that of UPF0173 metal-dependent hydrolase Meso_1362 from Chelativorans sp. (strain BNC1).